The following is a 556-amino-acid chain: Dihydroxy-acid dehydratase (556 aa).

D78 is a Mg(2+) binding site. C119 serves as a coordination point for [2Fe-2S] cluster. 2 residues coordinate Mg(2+): D120 and K121. Residue K121 is modified to N6-carboxylysine. Position 191 (C191) interacts with [2Fe-2S] cluster. A Mg(2+)-binding site is contributed by E442. S468 serves as the catalytic Proton acceptor.

This sequence belongs to the IlvD/Edd family. Homodimer. [2Fe-2S] cluster is required as a cofactor. Mg(2+) serves as cofactor.

It carries out the reaction (2R)-2,3-dihydroxy-3-methylbutanoate = 3-methyl-2-oxobutanoate + H2O. It catalyses the reaction (2R,3R)-2,3-dihydroxy-3-methylpentanoate = (S)-3-methyl-2-oxopentanoate + H2O. It participates in amino-acid biosynthesis; L-isoleucine biosynthesis; L-isoleucine from 2-oxobutanoate: step 3/4. It functions in the pathway amino-acid biosynthesis; L-valine biosynthesis; L-valine from pyruvate: step 3/4. Its function is as follows. Functions in the biosynthesis of branched-chain amino acids. Catalyzes the dehydration of (2R,3R)-2,3-dihydroxy-3-methylpentanoate (2,3-dihydroxy-3-methylvalerate) into 2-oxo-3-methylpentanoate (2-oxo-3-methylvalerate) and of (2R)-2,3-dihydroxy-3-methylbutanoate (2,3-dihydroxyisovalerate) into 2-oxo-3-methylbutanoate (2-oxoisovalerate), the penultimate precursor to L-isoleucine and L-valine, respectively. The sequence is that of Dihydroxy-acid dehydratase from Caldanaerobacter subterraneus subsp. tengcongensis (strain DSM 15242 / JCM 11007 / NBRC 100824 / MB4) (Thermoanaerobacter tengcongensis).